The following is a 111-amino-acid chain: UPF0375 protein ule-4 (111 aa).

Residues 1-18 form the signal peptide; the sequence is MNSRLVLLLAVSVALVSA. N-linked (GlcNAc...) asparagine glycosylation is found at Asn23 and Asn58.

This sequence belongs to the UPF0375 family.

The protein resides in the secreted. This is UPF0375 protein ule-4 from Caenorhabditis elegans.